We begin with the raw amino-acid sequence, 40 residues long: Cytochrome b6-f complex subunit 5 (40 aa).

The helical transmembrane segment at 5 to 25 threads the bilayer; the sequence is ILLGMVLGFVPVTIAGLLVAA.

This sequence belongs to the PetG family. In terms of assembly, the 4 large subunits of the cytochrome b6-f complex are cytochrome b6, subunit IV (17 kDa polypeptide, PetD), cytochrome f and the Rieske protein, while the 4 small subunits are PetG, PetL, PetM and PetN. The complex functions as a dimer.

The protein localises to the cell inner membrane. Functionally, component of the cytochrome b6-f complex, which mediates electron transfer between photosystem II (PSII) and photosystem I (PSI), cyclic electron flow around PSI, and state transitions. PetG is required for either the stability or assembly of the cytochrome b6-f complex. This is Cytochrome b6-f complex subunit 5 from Gloeobacter violaceus (strain ATCC 29082 / PCC 7421).